Reading from the N-terminus, the 536-residue chain is Probable tyrosyl-DNA phosphodiesterase (536 aa).

The Nucleophile role is filled by histidine 122. Lysine 124 is a binding site for substrate. The interaction with DNA stretch occupies residues 315 to 318 (SMGS). The Proton donor/acceptor role is filled by histidine 401. Lysine 403 contacts substrate.

The protein belongs to the tyrosyl-DNA phosphodiesterase family.

The protein resides in the nucleus. Functionally, DNA repair enzyme that can remove a variety of covalent adducts from DNA through hydrolysis of a 3'-phosphodiester bond, giving rise to DNA with a free 3' phosphate. Catalyzes the hydrolysis of dead-end complexes between DNA and the topoisomerase I active site tyrosine residue. Hydrolyzes 3'-phosphoglycolates on protruding 3' ends on DNA double-strand breaks due to DNA damage by radiation and free radicals. Acts on blunt-ended double-strand DNA breaks and on single-stranded DNA. May have low 3'exonuclease activity and may be able to remove a single nucleoside from the 3'end of DNA and RNA molecules with 3'hydroxyl groups. Has no exonuclease activity towards DNA or RNA with a 3'phosphate. This chain is Probable tyrosyl-DNA phosphodiesterase, found in Schizosaccharomyces pombe (strain 972 / ATCC 24843) (Fission yeast).